Reading from the N-terminus, the 192-residue chain is Thymidine kinase (192 aa).

Residues 9 to 16 (SAMNAGKT) and 88 to 91 (DECH) each bind ATP. The Proton acceptor role is filled by Glu89. Residues Cys146, Cys148, Cys183, and His186 each coordinate Zn(2+).

Belongs to the thymidine kinase family. Homotetramer.

The protein resides in the cytoplasm. It catalyses the reaction thymidine + ATP = dTMP + ADP + H(+). This chain is Thymidine kinase, found in Blochmanniella floridana.